Here is a 181-residue protein sequence, read N- to C-terminus: ATP synthase subunit delta (181 aa).

It belongs to the ATPase delta chain family. In terms of assembly, F-type ATPases have 2 components, F(1) - the catalytic core - and F(0) - the membrane proton channel. F(1) has five subunits: alpha(3), beta(3), gamma(1), delta(1), epsilon(1). F(0) has three main subunits: a(1), b(2) and c(10-14). The alpha and beta chains form an alternating ring which encloses part of the gamma chain. F(1) is attached to F(0) by a central stalk formed by the gamma and epsilon chains, while a peripheral stalk is formed by the delta and b chains.

The protein resides in the cell membrane. Functionally, f(1)F(0) ATP synthase produces ATP from ADP in the presence of a proton or sodium gradient. F-type ATPases consist of two structural domains, F(1) containing the extramembraneous catalytic core and F(0) containing the membrane proton channel, linked together by a central stalk and a peripheral stalk. During catalysis, ATP synthesis in the catalytic domain of F(1) is coupled via a rotary mechanism of the central stalk subunits to proton translocation. Its function is as follows. This protein is part of the stalk that links CF(0) to CF(1). It either transmits conformational changes from CF(0) to CF(1) or is implicated in proton conduction. The chain is ATP synthase subunit delta from Priestia megaterium (strain ATCC 12872 / QMB1551) (Bacillus megaterium).